Consider the following 1218-residue polypeptide: Probable RNA-dependent RNA polymerase SHL2 (1218 aa).

This sequence belongs to the RdRP family.

It catalyses the reaction RNA(n) + a ribonucleoside 5'-triphosphate = RNA(n+1) + diphosphate. Its function is as follows. Involved in the RNA silencing pathway. Probably required for the generation of small interfering RNAs (siRNAs). Regulates shoot apical meristem (SAM) initiation and maintenance and leaf polarization through the trans-acting siRNAS (ta-siRNAs) pathway which probably modulates the expression of the ARF2, ARF3, ARF4, ARF14 and ARF15 genes. The protein is Probable RNA-dependent RNA polymerase SHL2 (SHL2) of Oryza sativa subsp. japonica (Rice).